Consider the following 1538-residue polypeptide: Lysophospholipase nte1 (1538 aa).

At 1-74 the chain is on the cytoplasmic side; it reads MATDGGPLAA…PPPTPSTMAG (74 aa). Residues 75 to 95 form a helical membrane-spanning segment; sequence WFGWVFSFFFQVIPSVLYWVI. Over 96 to 117 the chain is Lumenal; that stretch reads TFATITLPTWLFTLFSMSLTFT. The helical transmembrane segment at 118–138 threads the bilayer; it reads MNFTTLLLIALAIVSTISWFI. The Cytoplasmic segment spans residues 139-1538; that stretch reads RYRFLNMYSR…RTLAPRRASI (1400 aa). 3 disordered regions span residues 242–264, 302–393, and 529–559; these read KPNV…DHRV, EGSS…KSVH, and AAQS…GDLL. Residues 302-314 show a composition bias toward low complexity; that stretch reads EGSSSSASSVGPS. Residues 329–345 show a composition bias toward basic and acidic residues; sequence GLEDSPRSNFVRDHGDS. Residues 692–811 and 856–976 each bind a nucleoside 3',5'-cyclic phosphate; these read GGTS…QGYV and RLTS…IAQR. A PNPLA domain is found at 1235–1399; sequence LVLGGGGARG…IDNLTVTHMK (165 aa). A GXGXXG motif is present at residues 1239-1244; it reads GGGARG. The GXSXG motif lies at 1266–1270; sequence GTSIG. The active-site Nucleophile is Ser1268. Residue Asp1386 is the Proton acceptor of the active site. A DGA/G motif is present at residues 1386–1388; the sequence is DGG. Positions 1517–1538 are disordered; sequence LPEETEEKKKLQRTLAPRRASI.

The protein belongs to the NTE family.

The protein resides in the endoplasmic reticulum membrane. The catalysed reaction is a 1-acyl-sn-glycero-3-phosphocholine + H2O = sn-glycerol 3-phosphocholine + a fatty acid + H(+). Its activity is regulated as follows. Inhibited by organophosphorus esters. Intracellular phospholipase B that catalyzes the double deacylation of phosphatidylcholine (PC) to glycerophosphocholine (GroPCho). Plays an important role in membrane lipid homeostasis. Responsible for the rapid PC turnover in response to inositol, elevated temperatures, or when choline is present in the growth medium. The chain is Lysophospholipase nte1 (nte1) from Aspergillus oryzae (strain ATCC 42149 / RIB 40) (Yellow koji mold).